Reading from the N-terminus, the 225-residue chain is Leucyl/phenylalanyl-tRNA--protein transferase (225 aa).

Belongs to the L/F-transferase family.

The protein resides in the cytoplasm. The catalysed reaction is N-terminal L-lysyl-[protein] + L-leucyl-tRNA(Leu) = N-terminal L-leucyl-L-lysyl-[protein] + tRNA(Leu) + H(+). The enzyme catalyses N-terminal L-arginyl-[protein] + L-leucyl-tRNA(Leu) = N-terminal L-leucyl-L-arginyl-[protein] + tRNA(Leu) + H(+). It carries out the reaction L-phenylalanyl-tRNA(Phe) + an N-terminal L-alpha-aminoacyl-[protein] = an N-terminal L-phenylalanyl-L-alpha-aminoacyl-[protein] + tRNA(Phe). Its function is as follows. Functions in the N-end rule pathway of protein degradation where it conjugates Leu, Phe and, less efficiently, Met from aminoacyl-tRNAs to the N-termini of proteins containing an N-terminal arginine or lysine. The chain is Leucyl/phenylalanyl-tRNA--protein transferase from Nitrobacter winogradskyi (strain ATCC 25391 / DSM 10237 / CIP 104748 / NCIMB 11846 / Nb-255).